The chain runs to 366 residues: Ribosomal RNA large subunit methyltransferase M (366 aa).

S-adenosyl-L-methionine is bound by residues Ser-188, 221–224 (CPGG), Asp-240, Asp-260, and Asp-277. Residue Lys-306 is the Proton acceptor of the active site.

Belongs to the class I-like SAM-binding methyltransferase superfamily. RNA methyltransferase RlmE family. RlmM subfamily. In terms of assembly, monomer.

It is found in the cytoplasm. It catalyses the reaction cytidine(2498) in 23S rRNA + S-adenosyl-L-methionine = 2'-O-methylcytidine(2498) in 23S rRNA + S-adenosyl-L-homocysteine + H(+). Its function is as follows. Catalyzes the 2'-O-methylation at nucleotide C2498 in 23S rRNA. The protein is Ribosomal RNA large subunit methyltransferase M of Salmonella arizonae (strain ATCC BAA-731 / CDC346-86 / RSK2980).